Consider the following 37-residue polypeptide: Cytochrome b6-f complex subunit 7 (37 aa).

Residues 5-25 (IFGTAFLFIVLVPVGLALGAF) form a helical membrane-spanning segment.

It belongs to the PetM family. As to quaternary structure, the 4 large subunits of the cytochrome b6-f complex are cytochrome b6, subunit IV (17 kDa polypeptide, PetD), cytochrome f and the Rieske protein, while the 4 small subunits are PetG, PetL, PetM and PetN. The complex functions as a dimer.

The protein localises to the cellular thylakoid membrane. Its function is as follows. Component of the cytochrome b6-f complex, which mediates electron transfer between photosystem II (PSII) and photosystem I (PSI), cyclic electron flow around PSI, and state transitions. The protein is Cytochrome b6-f complex subunit 7 of Synechococcus elongatus (strain ATCC 33912 / PCC 7942 / FACHB-805) (Anacystis nidulans R2).